The following is an 870-amino-acid chain: Leucine--tRNA ligase (870 aa).

A 'HIGH' region motif is present at residues 42 to 52 (PYPSGKLHMGH). The 'KMSKS' region signature appears at 629–633 (KMSKS). Lys632 contributes to the ATP binding site.

It belongs to the class-I aminoacyl-tRNA synthetase family.

It localises to the cytoplasm. The enzyme catalyses tRNA(Leu) + L-leucine + ATP = L-leucyl-tRNA(Leu) + AMP + diphosphate. The polypeptide is Leucine--tRNA ligase (Dechloromonas aromatica (strain RCB)).